The primary structure comprises 106 residues: Large ribosomal subunit protein uL24 (106 aa).

The span at 84–97 shows a compositional bias: basic and acidic residues; sequence EKIGRELGAKEKAR. The tract at residues 84-106 is disordered; that stretch reads EKIGRELGAKEKARLQKRKTAAK.

This sequence belongs to the universal ribosomal protein uL24 family. As to quaternary structure, part of the 50S ribosomal subunit.

Its function is as follows. One of two assembly initiator proteins, it binds directly to the 5'-end of the 23S rRNA, where it nucleates assembly of the 50S subunit. Functionally, one of the proteins that surrounds the polypeptide exit tunnel on the outside of the subunit. The chain is Large ribosomal subunit protein uL24 from Anaeromyxobacter dehalogenans (strain 2CP-1 / ATCC BAA-258).